The primary structure comprises 458 residues: Riboflavin transporter 2 (458 aa).

5 helical membrane passes run L11 to V31, W38 to V58, P73 to W93, V97 to V117, and G146 to C166. N168, N176, N182, and N199 each carry an N-linked (GlcNAc...) asparagine glycan. The chain crosses the membrane as a helical span at residues V204–N224. Positions D249–A274 are disordered. 5 helical membrane-spanning segments follow: residues F279 to V299, L325 to P345, L349 to M369, I388 to V408, and A417 to F437.

The protein belongs to the riboflavin transporter family.

Its subcellular location is the cell membrane. The enzyme catalyses riboflavin(in) = riboflavin(out). Functionally, plasma membrane transporter mediating the uptake by cells of the water soluble vitamin B2/riboflavin that plays a key role in biochemical oxidation-reduction reactions of the carbohydrate, lipid, and amino acid metabolism. This is Riboflavin transporter 2 (rft2) from Salmo salar (Atlantic salmon).